The sequence spans 230 residues: MATGKRLKKSREGIDRNKLYPIADAIRMVKERATSKFDETIEIAMNLGVDPRHADQMVRGVVTLPNGTGRTLRVGVFARGAKAEEAKAAGADVVGAEDLVETVQGGTIAFDRCIATPDMMPLVGRLGKVLGPRGMMPNPKIGTVTMDVAGAVKGAKGGSVEFRVEKAGIVQAGIGKASFSAEKLVENVKALADAVAKAKPAGAKGTYVQRIAVSSTMGPGVKVEPGTVLG.

It belongs to the universal ribosomal protein uL1 family. As to quaternary structure, part of the 50S ribosomal subunit.

In terms of biological role, binds directly to 23S rRNA. The L1 stalk is quite mobile in the ribosome, and is involved in E site tRNA release. Its function is as follows. Protein L1 is also a translational repressor protein, it controls the translation of the L11 operon by binding to its mRNA. In Nitrobacter winogradskyi (strain ATCC 25391 / DSM 10237 / CIP 104748 / NCIMB 11846 / Nb-255), this protein is Large ribosomal subunit protein uL1.